We begin with the raw amino-acid sequence, 289 residues long: Signal peptidase I (289 aa).

The Cytoplasmic segment spans residues 1–43; it reads MKKLTSTTTTLWDNKLFINNLKNFMQTNTESNNNKTTAQEWKS. The helical transmembrane segment at 44 to 64 threads the bilayer; sequence FILVVVIALMIRILIIESFVV. The Periplasmic portion of the chain corresponds to 65-289; it reads PTGSMKATIL…IFRNLYSIED (225 aa). Residues Ser-68 and Lys-131 contribute to the active site.

This sequence belongs to the peptidase S26 family.

Its subcellular location is the cell inner membrane. It catalyses the reaction Cleavage of hydrophobic, N-terminal signal or leader sequences from secreted and periplasmic proteins.. This chain is Signal peptidase I (lepB), found in Rickettsia bellii (strain OSU 85-389).